Consider the following 316-residue polypeptide: Transaldolase 2 (316 aa).

The active-site Schiff-base intermediate with substrate is the K131.

Belongs to the transaldolase family. Type 1 subfamily. Homodimer.

It localises to the cytoplasm. The catalysed reaction is D-sedoheptulose 7-phosphate + D-glyceraldehyde 3-phosphate = D-erythrose 4-phosphate + beta-D-fructose 6-phosphate. Its pathway is carbohydrate degradation; pentose phosphate pathway; D-glyceraldehyde 3-phosphate and beta-D-fructose 6-phosphate from D-ribose 5-phosphate and D-xylulose 5-phosphate (non-oxidative stage): step 2/3. In terms of biological role, transaldolase is important for the balance of metabolites in the pentose-phosphate pathway. The chain is Transaldolase 2 from Shigella sonnei (strain Ss046).